A 435-amino-acid chain; its full sequence is Homogentisate 1,2-dioxygenase (435 aa).

Histidine 289 (proton acceptor) is an active-site residue. Fe cation-binding residues include histidine 332 and glutamate 338. Residues tyrosine 347 and histidine 368 each contribute to the homogentisate site. Histidine 368 is a binding site for Fe cation.

Belongs to the homogentisate dioxygenase family. In terms of assembly, hexamer; dimer of trimers. Fe cation serves as cofactor.

It carries out the reaction homogentisate + O2 = 4-maleylacetoacetate + H(+). It participates in amino-acid degradation; L-phenylalanine degradation; acetoacetate and fumarate from L-phenylalanine: step 4/6. In terms of biological role, involved in the catabolism of homogentisate (2,5-dihydroxyphenylacetate or 2,5-OH-PhAc), a central intermediate in the degradation of phenylalanine and tyrosine. Catalyzes the oxidative ring cleavage of the aromatic ring of homogentisate to yield maleylacetoacetate. This chain is Homogentisate 1,2-dioxygenase, found in Pseudomonas savastanoi pv. phaseolicola (strain 1448A / Race 6) (Pseudomonas syringae pv. phaseolicola (strain 1448A / Race 6)).